Here is a 136-residue protein sequence, read N- to C-terminus: Antistasin (136 aa).

An N-terminal signal peptide occupies residues 1–17 (MIKLAILLLFTVAIVRC). Gln-18 carries the post-translational modification Pyrrolidone carboxylic acid. 10 disulfide bridges follow: Cys-25/Cys-36, Cys-30/Cys-43, Cys-45/Cys-65, Cys-50/Cys-68, Cys-54/Cys-70, Cys-79/Cys-90, Cys-84/Cys-97, Cys-99/Cys-120, Cys-105/Cys-123, and Cys-109/Cys-125. An Antistasin-like 1 domain is found at 45–70 (CSGVRCRMHCPHGFQRSRYGCEFCKC). The 26-residue stretch at 100–125 (KIDINCRKTCPNGLKRDKLGCEYCEC) folds into the Antistasin-like 2 domain. Residues 114-117 (KRDK) and 128-135 (KRKLIPRL) each bind heparin.

It belongs to the protease inhibitor I15 (antistasin) family.

Its subcellular location is the secreted. This highly disulfide-bonded protein is a potent inhibitor of factor Xa. May have therapeutic utility as an anticoagulant. Also exhibits a strong metastatic activity. The polypeptide is Antistasin (Haementeria officinalis (Mexican leech)).